We begin with the raw amino-acid sequence, 420 residues long: Serine hydroxymethyltransferase (420 aa).

(6S)-5,6,7,8-tetrahydrofolate-binding positions include L123 and 127–129 (GHL). Residue K232 is modified to N6-(pyridoxal phosphate)lysine. Residue 357 to 359 (SPF) coordinates (6S)-5,6,7,8-tetrahydrofolate.

It belongs to the SHMT family. As to quaternary structure, homodimer. The cofactor is pyridoxal 5'-phosphate.

It is found in the cytoplasm. The enzyme catalyses (6R)-5,10-methylene-5,6,7,8-tetrahydrofolate + glycine + H2O = (6S)-5,6,7,8-tetrahydrofolate + L-serine. It participates in one-carbon metabolism; tetrahydrofolate interconversion. Its pathway is amino-acid biosynthesis; glycine biosynthesis; glycine from L-serine: step 1/1. In terms of biological role, catalyzes the reversible interconversion of serine and glycine with tetrahydrofolate (THF) serving as the one-carbon carrier. This reaction serves as the major source of one-carbon groups required for the biosynthesis of purines, thymidylate, methionine, and other important biomolecules. Also exhibits THF-independent aldolase activity toward beta-hydroxyamino acids, producing glycine and aldehydes, via a retro-aldol mechanism. The sequence is that of Serine hydroxymethyltransferase from Streptococcus pyogenes serotype M12 (strain MGAS2096).